The following is a 203-amino-acid chain: ATP-dependent Clp protease proteolytic subunit (203 aa).

The Nucleophile role is filled by S107. The active site involves H132.

Belongs to the peptidase S14 family. In terms of assembly, fourteen ClpP subunits assemble into 2 heptameric rings which stack back to back to give a disk-like structure with a central cavity, resembling the structure of eukaryotic proteasomes.

The protein localises to the cytoplasm. It catalyses the reaction Hydrolysis of proteins to small peptides in the presence of ATP and magnesium. alpha-casein is the usual test substrate. In the absence of ATP, only oligopeptides shorter than five residues are hydrolyzed (such as succinyl-Leu-Tyr-|-NHMec, and Leu-Tyr-Leu-|-Tyr-Trp, in which cleavage of the -Tyr-|-Leu- and -Tyr-|-Trp bonds also occurs).. In terms of biological role, cleaves peptides in various proteins in a process that requires ATP hydrolysis. Has a chymotrypsin-like activity. Plays a major role in the degradation of misfolded proteins. The polypeptide is ATP-dependent Clp protease proteolytic subunit (Shewanella halifaxensis (strain HAW-EB4)).